The sequence spans 285 residues: NAD kinase (285 aa).

Asp-64 (proton acceptor) is an active-site residue. Residues 64–65 (DG), 138–139 (ND), Arg-149, Arg-166, Asp-168, Leu-176, 179–184 (SGYTIS), and Gln-238 contribute to the NAD(+) site.

It belongs to the NAD kinase family. A divalent metal cation is required as a cofactor.

It localises to the cytoplasm. The enzyme catalyses NAD(+) + ATP = ADP + NADP(+) + H(+). Involved in the regulation of the intracellular balance of NAD and NADP, and is a key enzyme in the biosynthesis of NADP. Catalyzes specifically the phosphorylation on 2'-hydroxyl of the adenosine moiety of NAD to yield NADP. The sequence is that of NAD kinase from Lawsonia intracellularis (strain PHE/MN1-00).